Reading from the N-terminus, the 189-residue chain is uncharacterized protein (189 aa).

This is an uncharacterized protein from Danio rerio (Zebrafish).